A 470-amino-acid chain; its full sequence is Chromosomal replication initiator protein DnaA (470 aa).

The domain I, interacts with DnaA modulators stretch occupies residues 1 to 89; that stretch reads MIESNHVVLW…YNVMVDKTSI (89 aa). The tract at residues 89–130 is domain II; it reads IPNQTVNLEASNRSTAVTPKSIVGGNKAPSFLKAPAVQDLDP. A domain III, AAA+ region region spans residues 131–348; sequence HLNPNYNFEN…GIVIAIMARS (218 aa). Residues glycine 176, glycine 178, lysine 179, and threonine 180 each coordinate ATP. A domain IV, binds dsDNA region spans residues 349 to 470; sequence TIFNKEIDLD…EIESLLKKKA (122 aa).

The protein belongs to the DnaA family. Oligomerizes as a right-handed, spiral filament on DNA at oriC.

The protein localises to the cytoplasm. In terms of biological role, plays an essential role in the initiation and regulation of chromosomal replication. ATP-DnaA binds to the origin of replication (oriC) to initiate formation of the DNA replication initiation complex once per cell cycle. Binds the DnaA box (a 9 base pair repeat at the origin) and separates the double-stranded (ds)DNA. Forms a right-handed helical filament on oriC DNA; dsDNA binds to the exterior of the filament while single-stranded (ss)DNA is stabiized in the filament's interior. The ATP-DnaA-oriC complex binds and stabilizes one strand of the AT-rich DNA unwinding element (DUE), permitting loading of DNA polymerase. After initiation quickly degrades to an ADP-DnaA complex that is not apt for DNA replication. Binds acidic phospholipids. The protein is Chromosomal replication initiator protein DnaA of Bacteroides thetaiotaomicron (strain ATCC 29148 / DSM 2079 / JCM 5827 / CCUG 10774 / NCTC 10582 / VPI-5482 / E50).